Consider the following 391-residue polypeptide: 1-deoxy-D-xylulose 5-phosphate reductoisomerase (391 aa).

6 residues coordinate NADPH: Thr-17, Gly-18, Ser-19, Ile-20, Asn-47, and Asn-130. Lys-131 provides a ligand contact to 1-deoxy-D-xylulose 5-phosphate. NADPH is bound at residue Glu-132. Residue Asp-156 participates in Mn(2+) binding. 1-deoxy-D-xylulose 5-phosphate-binding residues include Ser-157, Glu-158, Ser-182, and His-205. A Mn(2+)-binding site is contributed by Glu-158. Gly-211 provides a ligand contact to NADPH. 4 residues coordinate 1-deoxy-D-xylulose 5-phosphate: Ser-218, Asn-223, Lys-224, and Glu-227. Mn(2+) is bound at residue Glu-227.

The protein belongs to the DXR family. Requires Mg(2+) as cofactor. Mn(2+) serves as cofactor.

The enzyme catalyses 2-C-methyl-D-erythritol 4-phosphate + NADP(+) = 1-deoxy-D-xylulose 5-phosphate + NADPH + H(+). It participates in isoprenoid biosynthesis; isopentenyl diphosphate biosynthesis via DXP pathway; isopentenyl diphosphate from 1-deoxy-D-xylulose 5-phosphate: step 1/6. In terms of biological role, catalyzes the NADPH-dependent rearrangement and reduction of 1-deoxy-D-xylulose-5-phosphate (DXP) to 2-C-methyl-D-erythritol 4-phosphate (MEP). The protein is 1-deoxy-D-xylulose 5-phosphate reductoisomerase of Rhizobium meliloti (strain 1021) (Ensifer meliloti).